The following is a 387-amino-acid chain: Galactokinase (387 aa).

32 to 35 (EHTD) contacts substrate. Residues Ser66 and 123–129 (GAGLSSS) each bind ATP. Residues Ser129 and Glu161 each contribute to the Mg(2+) site. Residue Asp173 is the Proton acceptor of the active site. Tyr223 lines the substrate pocket.

This sequence belongs to the GHMP kinase family. GalK subfamily.

It localises to the cytoplasm. The catalysed reaction is alpha-D-galactose + ATP = alpha-D-galactose 1-phosphate + ADP + H(+). It functions in the pathway carbohydrate metabolism; galactose metabolism. Its function is as follows. Catalyzes the transfer of the gamma-phosphate of ATP to D-galactose to form alpha-D-galactose-1-phosphate (Gal-1-P). The polypeptide is Galactokinase (Enterococcus faecalis (strain ATCC 700802 / V583)).